Consider the following 270-residue polypeptide: Tetraspanin-17 (270 aa).

At 1 to 19 (MPGKHQQFQDPEVGCCGKY) the chain is on the cytoplasmic side. The chain crosses the membrane as a helical span at residues 20-40 (FLFGFNIVFWVLGALFLAIGL). The Extracellular segment spans residues 41-63 (WAWGEKGVLSNISALTDLGGLDP). The N-linked (GlcNAc...) asparagine glycan is linked to N51. The chain crosses the membrane as a helical span at residues 64–84 (VWLFVVVGGVMSVLGFAGCIG). Over 85-94 (ALRENTFLLK) the chain is Cytoplasmic. The helical transmembrane segment at 95 to 115 (FFSVFLGLIFFLELAAGILAF) threads the bilayer. Over 116 to 234 (VFKDWIRDQL…GQFEKWLQDN (119 aa)) the chain is Extracellular. Disulfide bonds link C155–C223, C156–C188, C172–C182, and C189–C202. The N-linked (GlcNAc...) asparagine glycan is linked to N171. Residues 235 to 255 (LIVVAGVLVGIALLQIFGLCL) traverse the membrane as a helical segment. Residues 256 to 270 (AQNLVSDIKAVKANW) lie on the Cytoplasmic side of the membrane.

This sequence belongs to the tetraspanin (TM4SF) family. Interacts with ADAM10; the interaction influences ADAM10 substrate specificity, endocytosis and turnover.

The protein resides in the cell membrane. Part of TspanC8 subgroup, composed of 6 members that interact with the transmembrane metalloprotease ADAM10. This interaction is required for ADAM10 exit from the endoplasmic reticulum and for enzymatic maturation and trafficking to the cell surface as well as substrate specificity. Different TspanC8/ADAM10 complexes have distinct substrates. Seems to regulate VE-cadherin expression in endothelial cells probably through interaction with ADAM10, promoting leukocyte transmigration. This Mus musculus (Mouse) protein is Tetraspanin-17 (Tspan17).